The sequence spans 103 residues: Putative glutaredoxin-C14 (103 aa).

The Glutaredoxin domain maps to 1-102 (MDRVMKLASE…PMLKNAGALW (102 aa)). Cys-21 and Cys-24 are oxidised to a cystine. Residues 100 to 103 (ALWL) carry the Responsive for interaction with TGA factors motif.

This sequence belongs to the glutaredoxin family. CC-type subfamily.

Its subcellular location is the cytoplasm. The protein resides in the nucleus. Functionally, has a glutathione-disulfide oxidoreductase activity in the presence of NADPH and glutathione reductase. Reduces low molecular weight disulfides and proteins. This Oryza sativa subsp. japonica (Rice) protein is Putative glutaredoxin-C14 (GRXC14).